The primary structure comprises 686 residues: Hexamerin 70c (686 aa).

The signal sequence occupies residues 1–19 (MLSKVVLLVALAAICGAQG). Residues 32 to 155 (FLHKQKKIFD…IAVLYRPDTK (124 aa)) form the Hemocyanin N-terminal domain. Positions 161–431 (AIYEIYPNYF…MLYQNILSYF (271 aa)) constitute a Hemocyanin middle domain. N-linked (GlcNAc...) asparagine glycans are attached at residues Asn-205 and Asn-662. Residues 440-676 (QYSQSELQMP…NMYFKDVFIY (237 aa)) enclose the Hemocyanin C-terminal domain.

The protein belongs to the hemocyanin/hexamerin family. As to quaternary structure, probable homohexamer. In terms of tissue distribution, expressed in the fat body and secreted into the hemolymph (at protein level). Present in trophocytes and oenocytes of the fat body (at protein level). Not expressed in ovary or testis.

It localises to the secreted. The protein resides in the nucleus. The protein localises to the cytoplasm. Its subcellular location is the cytoplasmic granule. Storage protein that may function as a nutrient supply to compensate for lack of dietary proteins during metamorphosis and egg production. The polypeptide is Hexamerin 70c (Apis mellifera (Honeybee)).